Here is a 304-residue protein sequence, read N- to C-terminus: Glutaminase (304 aa).

Positions 63, 114, 158, 165, 189, 240, and 258 each coordinate substrate.

Belongs to the glutaminase family. Homotetramer.

It carries out the reaction L-glutamine + H2O = L-glutamate + NH4(+). This is Glutaminase from Shewanella oneidensis (strain ATCC 700550 / JCM 31522 / CIP 106686 / LMG 19005 / NCIMB 14063 / MR-1).